A 74-amino-acid chain; its full sequence is Somatostatin-2 (74 aa).

Positions 1–46 (ARGAGLLSQDWSAVEDLLAQMSLPEADAQREAEVVSVATGGRLNLE) are excised as a propeptide. Cys63 and Cys74 are disulfide-bonded.

This sequence belongs to the somatostatin family.

The protein localises to the secreted. Somatostatin inhibits the release of somatotropin. The chain is Somatostatin-2 (sst2) from Myoxocephalus scorpius (Shorthorn sculpin).